Reading from the N-terminus, the 224-residue chain is Golgi to ER traffic protein 1 (224 aa).

The Lumenal segment spans residues 1 to 33 (MDEAIIVDAEFVAPVGTTAGEFVPIDRAPAAGL). A helical transmembrane segment spans residues 34-53 (LLLVAFVVLYAKVISKLGKP). Residues 54-137 (AIQEFLWEII…RFFTIISSAI (84 aa)) are Cytoplasmic-facing. Residues 102 to 124 (AKLDREYGKLKVEIEDINNLLTA) adopt a coiled-coil conformation. Residues 138–158 (FLSTTGMKMFLRIKHRKAAIF) traverse the membrane as a helical segment. Topologically, residues 159-182 (WLPKNAFPYPIEYILSFSSAPLGS) are lumenal. The chain crosses the membrane as a helical span at residues 183–199 (VSVSAWLMICDAAMDLI). The Cytoplasmic portion of the chain corresponds to 200-224 (VTIFVALVVGVIGMLRSNKVKPKTA).

Belongs to the WRB/GET1 family. As to quaternary structure, component of the Golgi to ER traffic (GET) complex, which is composed of GET1, GET2 and GET3. Within the complex, GET1 and GET2 form a heterotetramer which is stabilized by phosphatidylinositol binding and which binds to the GET3 homodimer.

It is found in the endoplasmic reticulum membrane. Its subcellular location is the golgi apparatus membrane. Its function is as follows. Required for the post-translational delivery of tail-anchored (TA) proteins to the endoplasmic reticulum. Together with GET2, acts as a membrane receptor for soluble GET3, which recognizes and selectively binds the transmembrane domain of TA proteins in the cytosol. The GET complex cooperates with the HDEL receptor ERD2 to mediate the ATP-dependent retrieval of resident ER proteins that contain a C-terminal H-D-E-L retention signal from the Golgi to the ER. In Yarrowia lipolytica (strain CLIB 122 / E 150) (Yeast), this protein is Golgi to ER traffic protein 1.